The chain runs to 465 residues: Mothers against decapentaplegic homolog 1 (465 aa).

Met-1 carries the N-acetylmethionine modification. Positions 12 to 136 constitute an MH1 domain; the sequence is PAVKRLLGWK…YKRVESPVLP (125 aa). Residues Cys-64, Cys-109, Cys-121, and His-126 each coordinate Zn(2+). The tract at residues 162-249 is disordered; sequence NEPHMPLNAT…QPMDTNMMAP (88 aa). Over residues 179–210 the composition is skewed to low complexity; sequence PNSHPFPHSPNSSYPNSPGSSSSTYPHSPTSS. The span at 221 to 232 shows a compositional bias: pro residues; that stretch reads DTPPPAYLPPED. The region spanning 271-465 is the MH2 domain; sequence WCSIVYYELN…SPHNPISSVS (195 aa). The residue at position 322 (Thr-322) is a Phosphothreonine; by MINK1, TNIK and MAP4K4. The tract at residues 418–428 is L3 loop; that stretch reads KGWGAEYHRQD. A phosphoserine mark is found at Ser-463 and Ser-465.

The protein belongs to the dwarfin/SMAD family. Found in a complex with SMAD4 and YY1. Interacts with HGS, NANOG and ZCCHC12. Upon C-terminus phosphorylation: forms trimers with another SMAD1 and the co-SMAD SMAD4. Interacts with PEBP2-alpha subunit, CREB-binding protein (CBP), p300, SMURF1, SMURF2, USP15 and HOXC8. Associates with ZNF423 or ZNF521 in response to BMP2 leading to activate transcription of BMP target genes. Interacts with SKOR1. Interacts (via MH2 domain) with LEMD3. Binding to LEMD3 results in at least a partial reduction of receptor-mediated phosphorylation. Forms a ternary complex with PSMB4 and OAZ1 before PSMB4 is incorporated into the 20S proteasome. Interacts (via MH2 domain) with FAM83G (via MH2 domain); in a SMAD4-independent manner. Interacts with ZC3H3. Interacts with TMEM119. Interacts (via MH1 and MH2 domains) with ZNF8. Interacts with RANBP3L; the interaction increases when SMAD1 is not phosphorylated and mediates SMAD1 nuclear export. Interacts with EGR1; this interaction inhibits SMAD1 dephosphorylation. Interacts with SMAD6. Interacts with YAP1. Interacts with MTMR4; negatively regulates BMP signaling through SMAD1 dephosphorylation and retention in endosomes. In terms of processing, phosphorylation of the C-terminal SVS motif by BMP type 1 receptor kinase activates SMAD1 by promoting dissociation from the receptor and trimerization with SMAD4. Phosphorylation by ERK2 MAP kinase in response to EGF or HGF prevents SMAD1 nuclear accumulation and transcriptional activity in response to BMP. Dephosphorylation, probably by PPM1A, induces its export from the nucleus to the cytoplasm. Dephosphorylation is inhibited by association with EGR1. Phosphorylation by CDK8/9 creates binding sites for YAP1, and subsequent phosphorylation by GSK3 switches off YAP1 binding and adds binding sites for SMURF1. Post-translationally, ubiquitinated by SMAD-specific E3 ubiquitin ligase SMURF1, leading to its degradation. Monoubiquitinated, leading to prevent DNA-binding. Deubiquitination by USP15 alleviates inhibition and promotes activation of TGF-beta target genes. Dephosphorylation, probably by PPM1A, induces its export from the nucleus to the cytoplasm. Phospho-SMAD1 is ubiquitinated by CHIP leading to disruption of the SMAD1-SMAD4 complex.

It localises to the cytoplasm. The protein resides in the nucleus. Transcriptional modulator that plays a role in various cellular processes, including embryonic development, cell differentiation, and tissue homeostasis. Upon BMP ligand binding to their receptors at the cell surface, is phosphorylated by activated type I BMP receptors (BMPRIs) and associates with SMAD4 to form an heteromeric complex which translocates into the nucleus acting as transcription factor. In turn, the hetero-trimeric complex recognizes cis-regulatory elements containing Smad Binding Elements (SBEs) to modulate the outcome of the signaling network. SMAD1/OAZ1/PSMB4 complex mediates the degradation of the CREBBP/EP300 repressor SNIP1. Positively regulates BMP4-induced expression of odontogenic development regulator MSX1 following IPO7-mediated nuclear import. This Bos taurus (Bovine) protein is Mothers against decapentaplegic homolog 1 (SMAD1).